The sequence spans 525 residues: NGFI-A-binding protein 2 (525 aa).

A disordered region spans residues 1 to 31; it reads MHRAPSPTAEQPPGRGDNTRRTPQPRFKASA. Phosphoserine is present on serine 6. Residues 35–113 are NCD1; the sequence is ALPRTLGELQ…REWATNPGLF (79 aa). The tract at residues 135–238 is disordered; that stretch reads GTRKGSMSNG…GAGGGPDRLE (104 aa). Phosphoserine occurs at positions 157, 159, 162, and 171. Residues 212–234 show a composition bias toward gly residues; that stretch reads AGGGVSEGPGVGGVAAGGAGGGP. Residues 267-356 are NCD2; sequence LLKLNKKLAR…SRQVARESTY (90 aa). Residues 353–384 are necessary for nuclear localization; it reads ESTYLSSLKGSRLHSEELGGPPLKKLKQEVGE. Residue lysine 379 forms a Glycyl lysine isopeptide (Lys-Gly) (interchain with G-Cter in SUMO1) linkage. The disordered stretch occupies residues 381-416; that stretch reads EVGEQSHNEIQQPPPGPESYAPPYRPSLEEDSASLS. Phosphoserine is present on serine 479. The interval 501–525 is disordered; sequence APGPHPALVEGRRSSVKVEAEASRQ. The segment covering 510-525 has biased composition (basic and acidic residues); that stretch reads EGRRSSVKVEAEASRQ. Lysine 517 is covalently cross-linked (Glycyl lysine isopeptide (Lys-Gly) (interchain with G-Cter in SUMO1); alternate). Residue lysine 517 forms a Glycyl lysine isopeptide (Lys-Gly) (interchain with G-Cter in SUMO2); alternate linkage.

This sequence belongs to the NAB family. Homomultimers may associate with EGR1 bound to DNA. Post-translationally, sumoylation by EGR2 represses EGR2 transcriptional activity in hindbrain. Highly expressed in brain and thymus, and at lower levels in spleen, kidney, heart and testis. Isoform 1 is predominantly expressed in testis, whereas isoform 3 is more abundant in thymus.

It is found in the nucleus. Its function is as follows. Acts as a transcriptional repressor for zinc finger transcription factors EGR1 and EGR2. Isoform 2 lacks repression ability. This is NGFI-A-binding protein 2 (Nab2) from Mus musculus (Mouse).